A 381-amino-acid polypeptide reads, in one-letter code: Testis-specific expressed protein 55 (381 aa).

Disordered regions lie at residues 1 to 176 (MDEP…SDPH) and 292 to 317 (TTEY…QSSR). Basic and acidic residues-rich tracts occupy residues 8–24 (SLNH…EKNN) and 65–103 (RTSE…ERRT). Positions 104 to 113 (SQPPNQQLPS) are enriched in polar residues. Residues 114 to 125 (HSERKTSGKIDG) are compositionally biased toward basic and acidic residues. Residues 134–143 (TDQETSEFDD) show a composition bias toward acidic residues. Polar residues-rich tracts occupy residues 147–163 (SAST…QEYN) and 292–302 (TTEYTSDTTPV). Residues 307–317 (RSSQRSSQSSR) are compositionally biased toward low complexity.

As to expression, testis-specific.

The protein localises to the nucleus. This Mus musculus (Mouse) protein is Testis-specific expressed protein 55.